Reading from the N-terminus, the 131-residue chain is uncharacterized protein (131 aa).

The MSP domain occupies 14–130 (FLLIYSSLEV…RRLPASFLST (117 aa)).

This is an uncharacterized protein from Caenorhabditis elegans.